The following is a 259-amino-acid chain: Haloacid dehalogenase-like hydrolase domain-containing protein 2 (259 aa).

Mg(2+)-binding residues include aspartate 13 and serine 15. Substrate is bound by residues 13 to 15 (DLS) and 46 to 47 (TN). Positions 47–71 (NTTKESKQDLLERLRKLEFDISEDE) form a coiled coil. Residue lysine 50 is modified to N6-succinyllysine. Lysine 179 is a substrate binding site. Mg(2+) is bound at residue aspartate 204.

Belongs to the HAD-like hydrolase superfamily. The cofactor is Mg(2+).

The polypeptide is Haloacid dehalogenase-like hydrolase domain-containing protein 2 (HDHD2) (Homo sapiens (Human)).